The primary structure comprises 195 residues: Imidazoleglycerol-phosphate dehydratase (195 aa).

Belongs to the imidazoleglycerol-phosphate dehydratase family.

The protein localises to the cytoplasm. It catalyses the reaction D-erythro-1-(imidazol-4-yl)glycerol 3-phosphate = 3-(imidazol-4-yl)-2-oxopropyl phosphate + H2O. It participates in amino-acid biosynthesis; L-histidine biosynthesis; L-histidine from 5-phospho-alpha-D-ribose 1-diphosphate: step 6/9. The polypeptide is Imidazoleglycerol-phosphate dehydratase (Campylobacter concisus (strain 13826)).